We begin with the raw amino-acid sequence, 156 residues long: Small ribosomal subunit protein uS7 (156 aa).

This sequence belongs to the universal ribosomal protein uS7 family. In terms of assembly, part of the 30S ribosomal subunit. Contacts proteins S9 and S11.

Functionally, one of the primary rRNA binding proteins, it binds directly to 16S rRNA where it nucleates assembly of the head domain of the 30S subunit. Is located at the subunit interface close to the decoding center, probably blocks exit of the E-site tRNA. The sequence is that of Small ribosomal subunit protein uS7 from Nitratidesulfovibrio vulgaris (strain ATCC 29579 / DSM 644 / CCUG 34227 / NCIMB 8303 / VKM B-1760 / Hildenborough) (Desulfovibrio vulgaris).